The sequence spans 401 residues: Acetate kinase (401 aa).

Residue N7 participates in Mg(2+) binding. Residue K14 coordinates ATP. Substrate is bound at residue R90. D147 functions as the Proton donor/acceptor in the catalytic mechanism. Residues H207 to G211, D282 to R284, and G330 to N334 contribute to the ATP site. E383 lines the Mg(2+) pocket.

It belongs to the acetokinase family. As to quaternary structure, homodimer. Requires Mg(2+) as cofactor. The cofactor is Mn(2+).

It localises to the cytoplasm. The catalysed reaction is acetate + ATP = acetyl phosphate + ADP. It functions in the pathway metabolic intermediate biosynthesis; acetyl-CoA biosynthesis; acetyl-CoA from acetate: step 1/2. Its function is as follows. Catalyzes the formation of acetyl phosphate from acetate and ATP. Can also catalyze the reverse reaction. This Clostridium novyi (strain NT) protein is Acetate kinase.